Consider the following 365-residue polypeptide: Geranylgeranyl pyrophosphate synthase (365 aa).

Residues 1-11 (MKPLPSTNGKV) show a composition bias toward polar residues. Residues 1–36 (MKPLPSTNGKVNGNGKHHDSSLSSTSSTSSSSSSDT) form a disordered region. Low complexity predominate over residues 21-34 (SLSSTSSTSSSSSS). Isopentenyl diphosphate-binding residues include Lys-78, Arg-81, and His-110. Positions 117 and 121 each coordinate Mg(2+). Arg-126 is a binding site for dimethylallyl diphosphate. Arg-127 contributes to the isopentenyl diphosphate binding site. Dimethylallyl diphosphate-binding residues include Lys-211, Thr-212, and Gln-247. Asp-250 is a binding site for Mg(2+). Dimethylallyl diphosphate is bound by residues Asn-254, Lys-263, and Lys-273.

The protein belongs to the FPP/GGPP synthase family. Requires Mg(2+) as cofactor.

The catalysed reaction is isopentenyl diphosphate + dimethylallyl diphosphate = (2E)-geranyl diphosphate + diphosphate. The enzyme catalyses isopentenyl diphosphate + (2E)-geranyl diphosphate = (2E,6E)-farnesyl diphosphate + diphosphate. It carries out the reaction isopentenyl diphosphate + (2E,6E)-farnesyl diphosphate = (2E,6E,10E)-geranylgeranyl diphosphate + diphosphate. Its function is as follows. Geranylgeranyl pyrophosphate synthase that catalyzes the trans-addition of the three molecules of IPP onto DMAPP to form geranylgeranyl pyrophosphate. Does not show any monoterpene nor sesquiterpene synthase activity. The polypeptide is Geranylgeranyl pyrophosphate synthase (Melampsora lini (Rust fungus)).